A 470-amino-acid chain; its full sequence is Methylenetetrahydrofolate--tRNA-(uracil-5-)-methyltransferase TrmFO (470 aa).

10–15 (GAGLAG) is a binding site for FAD.

This sequence belongs to the MnmG family. TrmFO subfamily. FAD is required as a cofactor.

The protein localises to the cytoplasm. The catalysed reaction is uridine(54) in tRNA + (6R)-5,10-methylene-5,6,7,8-tetrahydrofolate + NADH + H(+) = 5-methyluridine(54) in tRNA + (6S)-5,6,7,8-tetrahydrofolate + NAD(+). The enzyme catalyses uridine(54) in tRNA + (6R)-5,10-methylene-5,6,7,8-tetrahydrofolate + NADPH + H(+) = 5-methyluridine(54) in tRNA + (6S)-5,6,7,8-tetrahydrofolate + NADP(+). Its function is as follows. Catalyzes the folate-dependent formation of 5-methyl-uridine at position 54 (M-5-U54) in all tRNAs. The sequence is that of Methylenetetrahydrofolate--tRNA-(uracil-5-)-methyltransferase TrmFO from Prochlorococcus marinus subsp. pastoris (strain CCMP1986 / NIES-2087 / MED4).